We begin with the raw amino-acid sequence, 305 residues long: Ribosomal RNA small subunit methyltransferase H (305 aa).

Residues 33–35 (GGY), aspartate 51, phenylalanine 82, aspartate 96, and glutamine 103 each bind S-adenosyl-L-methionine.

Belongs to the methyltransferase superfamily. RsmH family.

The protein localises to the cytoplasm. The enzyme catalyses cytidine(1402) in 16S rRNA + S-adenosyl-L-methionine = N(4)-methylcytidine(1402) in 16S rRNA + S-adenosyl-L-homocysteine + H(+). Its function is as follows. Specifically methylates the N4 position of cytidine in position 1402 (C1402) of 16S rRNA. The protein is Ribosomal RNA small subunit methyltransferase H of Rickettsia bellii (strain OSU 85-389).